A 336-amino-acid chain; its full sequence is Phenylalanine--tRNA ligase alpha subunit (336 aa).

Residue E255 participates in Mg(2+) binding.

This sequence belongs to the class-II aminoacyl-tRNA synthetase family. Phe-tRNA synthetase alpha subunit type 1 subfamily. In terms of assembly, tetramer of two alpha and two beta subunits. Mg(2+) serves as cofactor.

It localises to the cytoplasm. It catalyses the reaction tRNA(Phe) + L-phenylalanine + ATP = L-phenylalanyl-tRNA(Phe) + AMP + diphosphate + H(+). This chain is Phenylalanine--tRNA ligase alpha subunit, found in Gemmatimonas aurantiaca (strain DSM 14586 / JCM 11422 / NBRC 100505 / T-27).